Reading from the N-terminus, the 250-residue chain is Large ribosomal subunit protein uL4 (250 aa).

Disordered regions lie at residues 1–20 (MQVTVRDLDGDDAGTLDLPR) and 51–101 (YAGL…HGLD). The span at 92-101 (PKAEKDHGLD) shows a compositional bias: basic and acidic residues.

This sequence belongs to the universal ribosomal protein uL4 family. Part of the 50S ribosomal subunit.

In terms of biological role, one of the primary rRNA binding proteins, this protein initially binds near the 5'-end of the 23S rRNA. It is important during the early stages of 50S assembly. It makes multiple contacts with different domains of the 23S rRNA in the assembled 50S subunit and ribosome. Functionally, forms part of the polypeptide exit tunnel. This Halobacterium salinarum (strain ATCC 29341 / DSM 671 / R1) protein is Large ribosomal subunit protein uL4.